The following is a 396-amino-acid chain: Carbamoyl phosphate synthase small chain (396 aa).

The segment at 1-204 (MTQHDNDPAW…WDKGFGQQDK (204 aa)) is CPSase. Residues S59, G256, and G258 each contribute to the L-glutamine site. The Glutamine amidotransferase type-1 domain occupies 208–396 (NVVAIDYGIK…AELMRQKKSA (189 aa)). Residue C285 is the Nucleophile of the active site. 5 residues coordinate L-glutamine: L286, Q289, N327, G329, and F330. Active-site residues include H369 and E371.

This sequence belongs to the CarA family. In terms of assembly, composed of two chains; the small (or glutamine) chain promotes the hydrolysis of glutamine to ammonia, which is used by the large (or ammonia) chain to synthesize carbamoyl phosphate. Tetramer of heterodimers (alpha,beta)4.

It carries out the reaction hydrogencarbonate + L-glutamine + 2 ATP + H2O = carbamoyl phosphate + L-glutamate + 2 ADP + phosphate + 2 H(+). The enzyme catalyses L-glutamine + H2O = L-glutamate + NH4(+). The protein operates within amino-acid biosynthesis; L-arginine biosynthesis; carbamoyl phosphate from bicarbonate: step 1/1. It functions in the pathway pyrimidine metabolism; UMP biosynthesis via de novo pathway; (S)-dihydroorotate from bicarbonate: step 1/3. In terms of biological role, small subunit of the glutamine-dependent carbamoyl phosphate synthetase (CPSase). CPSase catalyzes the formation of carbamoyl phosphate from the ammonia moiety of glutamine, carbonate, and phosphate donated by ATP, constituting the first step of 2 biosynthetic pathways, one leading to arginine and/or urea and the other to pyrimidine nucleotides. The small subunit (glutamine amidotransferase) binds and cleaves glutamine to supply the large subunit with the substrate ammonia. The chain is Carbamoyl phosphate synthase small chain from Bradyrhizobium diazoefficiens (strain JCM 10833 / BCRC 13528 / IAM 13628 / NBRC 14792 / USDA 110).